A 336-amino-acid polypeptide reads, in one-letter code: MGNCLHPAELSPSTQNSSQLNSEDLWNFSYDGNDSFPDVDYDANLEAAAPCHSCNLLDDSALPFFILVSVLGILASGIVLFMFFRPLFHWQLCPGWPVLAQLAVGSALFSIVVPILAPGLGNTRSSALCSLGYCVWYGSAFAQALLLGCHASLGPKLGADQVPGLTLGLSVGLWGVAALLTLPVTLASGASGGLCTPVYSMELKALQATHAVACLAIFVLLPLGLFGAKGLKKALGMGPGPWMNILWAWFIFWWPHGVVLGLDFLVRSKLLLLSTCLAQQALDLLLNLAEALAILHCVATPLLLALFCHQATRTLLPSLPLPEGWSSHLDTLGSKS.

Residues 1–63 are Extracellular-facing; it reads MGNCLHPAEL…CNLLDDSALP (63 aa). Asn-16, Asn-27, and Asn-33 each carry an N-linked (GlcNAc...) asparagine glycan. Cystine bridges form between Cys-51–Cys-276 and Cys-129–Cys-195. The chain crosses the membrane as a helical span at residues 64–84; that stretch reads FFILVSVLGILASGIVLFMFF. Residues 85–95 lie on the Cytoplasmic side of the membrane; sequence RPLFHWQLCPG. The chain crosses the membrane as a helical span at residues 96–116; sequence WPVLAQLAVGSALFSIVVPIL. The Extracellular segment spans residues 117-129; the sequence is APGLGNTRSSALC. Residues 130-153 form a helical membrane-spanning segment; the sequence is SLGYCVWYGSAFAQALLLGCHASL. Topologically, residues 154 to 166 are cytoplasmic; that stretch reads GPKLGADQVPGLT. A helical transmembrane segment spans residues 167 to 187; sequence LGLSVGLWGVAALLTLPVTLA. Residues 188 to 207 lie on the Extracellular side of the membrane; it reads SGASGGLCTPVYSMELKALQ. A helical membrane pass occupies residues 208-228; it reads ATHAVACLAIFVLLPLGLFGA. Residues 229–244 lie on the Cytoplasmic side of the membrane; the sequence is KGLKKALGMGPGPWMN. Residues 245-265 traverse the membrane as a helical segment; it reads ILWAWFIFWWPHGVVLGLDFL. The Extracellular segment spans residues 266–287; it reads VRSKLLLLSTCLAQQALDLLLN. Residues 288-308 form a helical membrane-spanning segment; the sequence is LAEALAILHCVATPLLLALFC. At 309 to 336 the chain is on the cytoplasmic side; that stretch reads HQATRTLLPSLPLPEGWSSHLDTLGSKS.

This sequence belongs to the G-protein coupled receptor 1 family. Atypical chemokine receptor subfamily.

Its subcellular location is the early endosome. The protein localises to the recycling endosome. The protein resides in the membrane. In terms of biological role, atypical chemokine receptor that controls chemokine levels and localization via high-affinity chemokine binding that is uncoupled from classic ligand-driven signal transduction cascades, resulting instead in chemokine sequestration, degradation, or transcytosis. Also known as interceptor (internalizing receptor) or chemokine-scavenging receptor or chemokine decoy receptor. Has a promiscuous chemokine-binding profile, interacting with inflammatory chemokines of both the CXC and the CC subfamilies but not with homeostatic chemokines. Acts as a receptor for chemokines including CCL2, CCL5, CCL7, CCL11, CCL13, CCL14, CCL17, CXCL5, CXCL6, IL8/CXCL8, CXCL11, GRO, RANTES, MCP-1 and TARC. May regulate chemokine bioavailability and, consequently, leukocyte recruitment through two distinct mechanisms: when expressed in endothelial cells, it sustains the abluminal to luminal transcytosis of tissue-derived chemokines and their subsequent presentation to circulating leukocytes; when expressed in erythrocytes, serves as blood reservoir of cognate chemokines but also as a chemokine sink, buffering potential surges in plasma chemokine levels. This Papio hamadryas (Hamadryas baboon) protein is Atypical chemokine receptor 1 (ACKR1).